We begin with the raw amino-acid sequence, 497 residues long: Probable malate:quinone oxidoreductase (497 aa).

This sequence belongs to the MQO family. It depends on FAD as a cofactor.

It carries out the reaction (S)-malate + a quinone = a quinol + oxaloacetate. It participates in carbohydrate metabolism; tricarboxylic acid cycle; oxaloacetate from (S)-malate (quinone route): step 1/1. The protein is Probable malate:quinone oxidoreductase of Wolinella succinogenes (strain ATCC 29543 / DSM 1740 / CCUG 13145 / JCM 31913 / LMG 7466 / NCTC 11488 / FDC 602W) (Vibrio succinogenes).